Here is a 236-residue protein sequence, read N- to C-terminus: Phosphoribosylaminoimidazole-succinocarboxamide synthase (236 aa).

This sequence belongs to the SAICAR synthetase family.

It carries out the reaction 5-amino-1-(5-phospho-D-ribosyl)imidazole-4-carboxylate + L-aspartate + ATP = (2S)-2-[5-amino-1-(5-phospho-beta-D-ribosyl)imidazole-4-carboxamido]succinate + ADP + phosphate + 2 H(+). The protein operates within purine metabolism; IMP biosynthesis via de novo pathway; 5-amino-1-(5-phospho-D-ribosyl)imidazole-4-carboxamide from 5-amino-1-(5-phospho-D-ribosyl)imidazole-4-carboxylate: step 1/2. This chain is Phosphoribosylaminoimidazole-succinocarboxamide synthase, found in Pseudomonas putida (strain W619).